The sequence spans 501 residues: Lysine--tRNA ligase (501 aa).

Mg(2+) contacts are provided by glutamate 404 and glutamate 411.

This sequence belongs to the class-II aminoacyl-tRNA synthetase family. As to quaternary structure, homodimer. The cofactor is Mg(2+).

The protein localises to the cytoplasm. It catalyses the reaction tRNA(Lys) + L-lysine + ATP = L-lysyl-tRNA(Lys) + AMP + diphosphate. The polypeptide is Lysine--tRNA ligase (lysS) (Campylobacter jejuni subsp. jejuni serotype O:2 (strain ATCC 700819 / NCTC 11168)).